A 407-amino-acid chain; its full sequence is uncharacterized protein (407 aa).

Positions 1–27 (MRILAMTRAHNAGRTLAATLDSLAVFS) are cleaved as a signal peptide.

This is an uncharacterized protein from Mycobacterium bovis (strain ATCC BAA-935 / AF2122/97).